The following is a 205-amino-acid chain: Lymphotoxin-alpha (205 aa).

An N-terminal signal peptide occupies residues 1 to 34 (MTPPERLFLPRVRGTTLHLLLLGLLLVLLPGAQG). An O-linked (GalNAc...) threonine glycan is attached at Thr-41. The THD domain occupies 63 to 205 (PAAHLIGDPS…STVFFGAFAL (143 aa)). N-linked (GlcNAc...) asparagine glycosylation is present at Asn-96.

The protein belongs to the tumor necrosis factor family. Homotrimer, and heterotrimer of either two LTB and one LTA subunits or (less prevalent) two LTA and one LTB subunits. Interacts with TNFRSF14.

The protein resides in the secreted. Its subcellular location is the membrane. Cytokine that in its homotrimeric form binds to TNFRSF1A/TNFR1, TNFRSF1B/TNFBR and TNFRSF14/HVEM. In its heterotrimeric form with LTB binds to TNFRSF3/LTBR. Lymphotoxin is produced by lymphocytes and is cytotoxic for a wide range of tumor cells in vitro and in vivo. This chain is Lymphotoxin-alpha (LTA), found in Pan troglodytes (Chimpanzee).